We begin with the raw amino-acid sequence, 519 residues long: uncharacterized protein (519 aa).

14 consecutive transmembrane segments (helical) span residues 37-57, 82-102, 114-134, 146-166, 175-195, 209-229, 240-260, 269-289, 309-329, 337-357, 373-393, 402-422, 434-454, and 475-495; these read ISMS…AQLM, GQLS…ILIA, MFVL…FSYY, ALTG…LGRV, LIFA…SVFS, WTTA…IPHI, FDYL…FSWN, VPYV…FVLV, CVLI…YYLW, FATP…GCAA, IMVV…TAPI, FVSI…ATLM, IAAS…LGIA, and AWYM…LTVF.

Belongs to the major facilitator superfamily.

The protein localises to the endoplasmic reticulum. The protein resides in the membrane. This is an uncharacterized protein from Schizosaccharomyces pombe (strain 972 / ATCC 24843) (Fission yeast).